The chain runs to 86 residues: Exodeoxyribonuclease 7 small subunit (86 aa).

This sequence belongs to the XseB family. In terms of assembly, heterooligomer composed of large and small subunits.

The protein localises to the cytoplasm. The enzyme catalyses Exonucleolytic cleavage in either 5'- to 3'- or 3'- to 5'-direction to yield nucleoside 5'-phosphates.. Its function is as follows. Bidirectionally degrades single-stranded DNA into large acid-insoluble oligonucleotides, which are then degraded further into small acid-soluble oligonucleotides. The chain is Exodeoxyribonuclease 7 small subunit from Xanthomonas oryzae pv. oryzae (strain MAFF 311018).